The primary structure comprises 404 residues: Cysteine desulfurase IscS (404 aa).

Pyridoxal 5'-phosphate is bound by residues 75–76, N155, Q183, and 203–205; these read AT and SAH. K206 is subject to N6-(pyridoxal phosphate)lysine. T243 lines the pyridoxal 5'-phosphate pocket. Catalysis depends on C328, which acts as the Cysteine persulfide intermediate. A [2Fe-2S] cluster-binding site is contributed by C328.

The protein belongs to the class-V pyridoxal-phosphate-dependent aminotransferase family. NifS/IscS subfamily. In terms of assembly, homodimer. Forms a heterotetramer with IscU, interacts with other sulfur acceptors. It depends on pyridoxal 5'-phosphate as a cofactor.

The protein resides in the cytoplasm. The enzyme catalyses (sulfur carrier)-H + L-cysteine = (sulfur carrier)-SH + L-alanine. It participates in cofactor biosynthesis; iron-sulfur cluster biosynthesis. In terms of biological role, master enzyme that delivers sulfur to a number of partners involved in Fe-S cluster assembly, tRNA modification or cofactor biosynthesis. Catalyzes the removal of elemental sulfur atoms from cysteine to produce alanine. Functions as a sulfur delivery protein for Fe-S cluster synthesis onto IscU, an Fe-S scaffold assembly protein, as well as other S acceptor proteins. This chain is Cysteine desulfurase IscS, found in Pseudomonas fluorescens (strain SBW25).